The sequence spans 210 residues: MGDSDVGDRLPPPSSSDELSSFLRQILSRTPTAQPSSPPKSTNVSSAETFFPSVSGGAVSSVGYGVSETGQDKYAFEHKRSGAKQRNSLKRNIDAQFHNLSEKKRRSKINEKMKALQKLIPNSNKTDKASMLDEAIEYLKQLQLQVQTLAVMNGLGLNPMRLPQVPPPTHTRINETLEQDLNLETLLAAPHSLEPAKTSQGMCFSTATLL.

Residues 1–49 form a disordered region; sequence MGDSDVGDRLPPPSSSDELSSFLRQILSRTPTAQPSSPPKSTNVSSAET. Over residues 27 to 48 the composition is skewed to polar residues; it reads LSRTPTAQPSSPPKSTNVSSAE. In terms of domain architecture, bHLH spans 93–142; sequence IDAQFHNLSEKKRRSKINEKMKALQKLIPNSNKTDKASMLDEAIEYLKQL.

Homodimer. Expressed constitutively in roots, leaves, stems, and flowers. Confined to the valve margins of the silique.

It localises to the nucleus. Required for the dehiscence of fruit, especially for the separation of the valve cells from the replum. Promotes the differentiation of a strip of labile nonlignified cells sandwiched between layers of lignified cells. The sequence is that of Transcription factor ALC (ALC) from Arabidopsis thaliana (Mouse-ear cress).